We begin with the raw amino-acid sequence, 166 residues long: MSKVIETKQQVVTEIADKLRASKSTIVVDYRGLTVSEATELRKQLREAGVEFKVYKNSLTRRAAESAEMAELNEFLTGPNAIAFSNEDVVAPAKVLNDFAKNHEALEIKAGVIEGKLVTLDEVKAIATLPSREGLLSMLLSVLQAPIRNLALATKAVAEQKEEQGA.

It belongs to the universal ribosomal protein uL10 family. In terms of assembly, part of the ribosomal stalk of the 50S ribosomal subunit. The N-terminus interacts with L11 and the large rRNA to form the base of the stalk. The C-terminus forms an elongated spine to which L12 dimers bind in a sequential fashion forming a multimeric L10(L12)X complex.

Functionally, forms part of the ribosomal stalk, playing a central role in the interaction of the ribosome with GTP-bound translation factors. In Bacillus cereus (strain G9842), this protein is Large ribosomal subunit protein uL10.